The following is a 236-amino-acid chain: Small ribosomal subunit protein uS5 (236 aa).

The S5 DRBM domain occupies 61–124; the sequence is ENQEIIDIAL…NYAKLNIIEI (64 aa).

This sequence belongs to the universal ribosomal protein uS5 family. In terms of assembly, part of the 30S ribosomal subunit. Contacts protein S4.

Its function is as follows. With S4 and S12 plays an important role in translational accuracy. This Pyrococcus horikoshii (strain ATCC 700860 / DSM 12428 / JCM 9974 / NBRC 100139 / OT-3) protein is Small ribosomal subunit protein uS5.